The primary structure comprises 193 residues: Sorting nexin-22 (193 aa).

The tract at residues 1-21 (MLEVHIPSVGPEAEGPRQSPE) is disordered. Residues 1–118 (MLEVHIPSVG…HFPTDPKASN (118 aa)) form the PX domain. A 1,2-diacyl-sn-glycero-3-phospho-(1D-myo-inositol-3-phosphate)-binding residues include Arg-43, Ser-45, Lys-66, and Arg-79.

It belongs to the sorting nexin family. As to quaternary structure, (Microbial infection) Interacts with P.falciparum (strain 3D7) CK1. In terms of tissue distribution, expressed in erythrocytes (at protein level).

Its subcellular location is the cytoplasmic vesicle membrane. May be involved in several stages of intracellular trafficking. Interacts with membranes containing phosphatidylinositol 3-phosphate (PtdIns(3P)). This Homo sapiens (Human) protein is Sorting nexin-22 (SNX22).